The chain runs to 307 residues: tRNA dimethylallyltransferase (307 aa).

9–16 contributes to the ATP binding site; that stretch reads GPTAVGKT. 11 to 16 contributes to the substrate binding site; it reads TAVGKT. Residues 34 to 37 form an interaction with substrate tRNA region; the sequence is DSMQ.

The protein belongs to the IPP transferase family. In terms of assembly, monomer. Mg(2+) is required as a cofactor.

It catalyses the reaction adenosine(37) in tRNA + dimethylallyl diphosphate = N(6)-dimethylallyladenosine(37) in tRNA + diphosphate. Catalyzes the transfer of a dimethylallyl group onto the adenine at position 37 in tRNAs that read codons beginning with uridine, leading to the formation of N6-(dimethylallyl)adenosine (i(6)A). The protein is tRNA dimethylallyltransferase of Limosilactobacillus reuteri (strain DSM 20016) (Lactobacillus reuteri).